A 405-amino-acid chain; its full sequence is mRNA cap guanine-N(7) methyltransferase (405 aa).

The tract at residues 1–78 (MDNILNPEDN…PRLEEGHGSL (78 aa)) is disordered. Polar residues-rich tracts occupy residues 9–18 (DNVSQTNTET) and 36–45 (KFTASGQNLD). Residues 58-75 (KAGEPESPSKRPRLEEGH) show a composition bias toward basic and acidic residues. Residues 97–404 (SRIFHLRNFN…IYLLFAFEKQ (308 aa)) form the mRNA cap 0 methyltransferase domain. 106 to 107 (NN) is a binding site for mRNA. S-adenosyl-L-methionine-binding residues include lysine 110, glycine 134, aspartate 156, aspartate 190, glutamine 213, and tyrosine 218.

It belongs to the class I-like SAM-binding methyltransferase superfamily. mRNA cap 0 methyltransferase family.

It is found in the nucleus. The enzyme catalyses a 5'-end (5'-triphosphoguanosine)-ribonucleoside in mRNA + S-adenosyl-L-methionine = a 5'-end (N(7)-methyl 5'-triphosphoguanosine)-ribonucleoside in mRNA + S-adenosyl-L-homocysteine. Catalytic subunit of the mRNA-capping methyltransferase RNMT:RAMAC complex that methylates the N7 position of the added guanosine to the 5'-cap structure of mRNAs. Binds RNA containing 5'-terminal GpppC. The polypeptide is mRNA cap guanine-N(7) methyltransferase (rnmt) (Xenopus tropicalis (Western clawed frog)).